The following is a 379-amino-acid chain: ATP-sensitive inward rectifier potassium channel 10 (379 aa).

Topologically, residues 1 to 61 are cytoplasmic; that stretch reads MTSVAKVYYS…LKDLWTTFID (61 aa). Residue R36 coordinates 1,2-dioctanoyl-sn-glycero-3-phospho-(1D-myo-inositol-4,5-bisphosphate). The chain crosses the membrane as a helical span at residues 62-88; the sequence is MQWRYKLLLFSATFAGTWFLFGVVWYL. Residues 89-114 are Extracellular-facing; the sequence is VAVAHGDLLELGPPANHTPCVVQVHT. C108 and C140 form a disulfide bridge. Residues 115-131 constitute an intramembrane region (discontinuously helical; Pore-forming); the sequence is LTGAFLFSLESQTTIGY. Residues 128–133 carry the Selectivity filter motif; that stretch reads TIGYGF. The Extracellular portion of the chain corresponds to 132-140; that stretch reads GFRYISEEC. The helical transmembrane segment at 141–166 threads the bilayer; that stretch reads PLAIVLLIAQLVLTTILEIFITGTFL. At 167–379 the chain is on the cytoplasmic side; that stretch reads AKIARPKKRA…SALSVRISNV (213 aa). 1,2-dioctanoyl-sn-glycero-3-phospho-(1D-myo-inositol-4,5-bisphosphate) contacts are provided by K168, R171, and K173. 210-217 serves as a coordination point for ATP; that stretch reads GCQVTGKL.

It belongs to the inward rectifier-type potassium channel (TC 1.A.2.1) family. KCNJ10 subfamily. In terms of assembly, homotetramer. In kidney cells, it forms heteromeric channels with Kir5.1/KCNJ16; this interaction is required for KCNJ16 localization to the basolateral membrane. Interacts with MAGI1, alone and possibly as a heteromer with KCNJ16; this interaction may facilitate KCNJ10/KCNJ16 potassium channel expression at the basolateral membrane in kidney cells. Interacts with PATJ. Predominantly expressed in the brain, including in glial cells of the cerebellum and forebrain. Expressed at lower levels in the kidney, and other peripheral tissues.

It is found in the membrane. Its subcellular location is the basolateral cell membrane. It catalyses the reaction K(+)(in) = K(+)(out). With respect to regulation, channel activity is strongly regulated by variations of cytosolic pH; channels are activated by alkaline and inhibited by acidic pH values. Activated by phosphatidylinositol 4,5 biphosphate (PtdIns(4,5)P2). Inhibited by Ba(2+) and Cs(+). Functionally, may be responsible for potassium buffering action of glial cells in the brain. Inward rectifier potassium channels are characterized by a greater tendency to allow potassium to flow into the cell rather than out of it. Their voltage dependence is regulated by the concentration of extracellular potassium; as external potassium is raised, the voltage range of the channel opening shifts to more positive voltages. The inward rectification is mainly due to the blockage of outward current by internal magnesium. Can be blocked by extracellular barium and cesium. In the kidney, together with KCNJ16, mediates basolateral K(+) recycling in distal tubules; this process is critical for Na(+) reabsorption at the tubules. This chain is ATP-sensitive inward rectifier potassium channel 10, found in Rattus norvegicus (Rat).